The sequence spans 904 residues: Toll-like receptor 3 (904 aa).

The signal sequence occupies residues 1 to 26; it reads MSRPLPYHIYFFTGLLTCWILCTSSA. Residues 27-52 enclose the LRRNT domain; sequence HKCTVRHEVADCSHLKLTQIPEDLPT. Topologically, residues 27 to 705 are lumenal; that stretch reads HKCTVRHEVA…PCKDSAPFEL (679 aa). Cys29 and Cys38 are joined by a disulfide. N-linked (GlcNAc...) asparagine glycosylation is found at Asn53, Asn58, and Asn71. LRR repeat units follow at residues 53-74, 77-98, 101-122, 125-146, 149-170, and 173-196; these read NITV…NFTR, RLTI…LCQN, WLEI…TFVF, NLTE…PFKN, NLIK…TQLQ, and NLQE…DFLG. A disulfide bond links Cys96 and Cys123. The N-linked (GlcNAc...) asparagine glycan is linked to Asn125. An N-linked (GlcNAc...) asparagine glycan is attached at Asn197. 2 LRR repeats span residues 199–220 and 223–245; these read SLER…CFHA and KLSG…LCLE. 4 N-linked (GlcNAc...) asparagine glycosylation sites follow: Asn248, Asn253, Asn276, and Asn292. LRR repeat units lie at residues 250–271, 276–297, 300–321, 324–345, 357–378, 381–401, 409–430, 433–455, 466–487, 508–529, 532–553, 564–585, 588–609, and 612–633; these read SIEN…TFSG, NLTT…SFAW, HLEY…SFYG, NLRH…TSLP, CLEY…TFTG, RLKF…TNET, PLLL…AFSW, HLEV…EWRG, YNKY…QRLM, NLVI…LLKG, KLEI…ANPG, HLRI…AFKD, ELKS…VFDN, and SLKS…VFGP. Asn399 and Asn414 each carry an N-linked (GlcNAc...) asparagine glycan. N-linked (GlcNAc...) asparagine glycans are attached at residues Asn637, Asn663, and Asn668. The region spanning 646 to 699 is the LRRCT domain; that stretch reads NPFDCTCESIAWFVNWINSTHTNISELSNHYLCNTPPQYHGFPVMLFDVSPCKD. 2 cysteine pairs are disulfide-bonded: Cys650-Cys678 and Cys652-Cys697. A helical membrane pass occupies residues 706-726; sequence LFMINTNILLIFIFIVLLIHF. Topologically, residues 727-904 are cytoplasmic; the sequence is EGWRISFYWN…VALGSRNSAH (178 aa). A TIR domain is found at 754–897; sequence FEYAAYIIHA…AFHHKLKVAL (144 aa). Residue Tyr759 is modified to Phosphotyrosine. Glycyl lysine isopeptide (Lys-Gly) (interchain with G-Cter in ubiquitin) cross-links involve residues Lys812 and Lys831. Tyr858 carries the post-translational modification Phosphotyrosine.

It belongs to the Toll-like receptor family. Monomer and homodimer; dimerization is triggered by ligand-binding and is required for TLR3 signaling. Interacts (via transmembrane domain) with UNC93B1. Interacts with TICAM1 (via the TIR domain) in response to poly(I:C) and this interaction is enhanced the presence of WDFY1. Interacts with SRC; upon binding of double-stranded RNA. The tyrosine-phosphorylated form (via TIR domain) interacts with WDFY1 (via WD repeat 2) in response to poly(I:C). In terms of processing, ubiquitinated by TRIM3; leading to recognition and sorting of polyubiquitinated TLR3 by the ESCRT complexes. Ubiquitinated by ZNRF1 via 'Lys-63'-linked ubiquitin chains; leading to TLR3 lysosomal trafficking and degradation.

The protein localises to the endoplasmic reticulum membrane. It is found in the endosome membrane. Its subcellular location is the early endosome. In terms of biological role, key component of innate and adaptive immunity. TLRs (Toll-like receptors) control host immune response against pathogens through recognition of molecular patterns specific to microorganisms. TLR3 is a nucleotide-sensing TLR which is activated by double-stranded RNA, a sign of viral infection. Acts via the adapter TRIF/TICAM1, leading to NF-kappa-B activation, cytokine secretion and the inflammatory response. The polypeptide is Toll-like receptor 3 (TLR3) (Boselaphus tragocamelus (Nilgai)).